Reading from the N-terminus, the 410-residue chain is MFDTVCTLPLSADLFAQAIHPSEPIISVGLSTGHVQTFRLPTEEEEEHSDDEQASVSSSRNGKGHIDTMWRTRRHKGSCRTLTFGIDGEMLYSAGTDGLVKAAKAETGVVENKILIPTAKDGSVDAPTVVHALSPQTLLLATDSSKLHLYDLRVPYSKVAAPPQQTHRPHDDYVSSLTPLPASDTSTSGFSKQWVTTGGTTLAVTDLRRGVLMRSEDQEEELVSSTYIGGLSASGTSRGEKVVVGGSSGVLTLWERGAWDDQDERIYVERGAGGGESLETLTVVPEELGKGKMIAAGLGSGKVKFVRMGLNKVVSELTHDETEGVIGLGFDVEGHMVSGGGQIVKVWHEAADSIGGEKRGFGGDSDDSDDDSDDSDHEPKQGDDSRRKRKKQKGKDRGKGPEIMAFADLD.

WD repeat units follow at residues P9 to H48, R74 to K113, A119 to A160, V223 to E264, G273 to E316, and D320 to E357. The tract at residues P41 to H65 is disordered. Residues E43 to Q53 show a composition bias toward acidic residues. The tract at residues I354–D410 is disordered. Over residues D364–D376 the composition is skewed to acidic residues. Over residues H377–R386 the composition is skewed to basic and acidic residues.

This sequence belongs to the WD repeat WDR55 family.

It localises to the nucleus. The protein localises to the nucleolus. The polypeptide is WD repeat-containing protein jip5 (jip5) (Emericella nidulans (strain FGSC A4 / ATCC 38163 / CBS 112.46 / NRRL 194 / M139) (Aspergillus nidulans)).